We begin with the raw amino-acid sequence, 157 residues long: Mitochondrial inner membrane protease subunit 1 (157 aa).

Catalysis depends on residues Ser-35 and Lys-80.

This sequence belongs to the peptidase S26 family. IMP1 subfamily. Heterodimer of 2 subunits, imp1 and imp2.

It is found in the mitochondrion inner membrane. Functionally, catalyzes the removal of transit peptides required for the targeting of proteins from the mitochondrial matrix, across the inner membrane, into the inter-membrane space. The chain is Mitochondrial inner membrane protease subunit 1 (imp1) from Schizosaccharomyces pombe (strain 972 / ATCC 24843) (Fission yeast).